Here is a 128-residue protein sequence, read N- to C-terminus: Nitrogen fixation nifHD region GlnB-like protein 2 (128 aa).

Belongs to the P(II) protein family.

Could be involved in the regulation of nitrogen fixation. In Methanothermococcus thermolithotrophicus (Methanococcus thermolithotrophicus), this protein is Nitrogen fixation nifHD region GlnB-like protein 2 (glnBB).